Here is a 515-residue protein sequence, read N- to C-terminus: 1-pyrroline-5-carboxylate dehydrogenase (515 aa).

Active-site residues include Glu-286 and Cys-320.

It belongs to the aldehyde dehydrogenase family. RocA subfamily.

The enzyme catalyses L-glutamate 5-semialdehyde + NAD(+) + H2O = L-glutamate + NADH + 2 H(+). The protein operates within amino-acid degradation; L-proline degradation into L-glutamate; L-glutamate from L-proline: step 2/2. The protein is 1-pyrroline-5-carboxylate dehydrogenase of Bacillus cytotoxicus (strain DSM 22905 / CIP 110041 / 391-98 / NVH 391-98).